A 418-amino-acid polypeptide reads, in one-letter code: uncharacterized protein (418 aa).

This sequence belongs to the poxviruses C4/C10 family.

This is an uncharacterized protein from Fowlpox virus (strain NVSL) (FPV).